The chain runs to 651 residues: MQDLFGSVRRSLVFRSTTDDENQENHPPPFPSLLADKITSCIRKSMVFAKSQSPPNNSTVQIKPPIRWRKGQLIGRGAFGTVYMGMNLDSGELLAVKQVLITSNCASKEKTQAHIQELEEEVKLLKNLSHPNIVRYLGTVREDETLNILLEFVPGGSISSLLEKFGAFPESVVRTYTNQLLLGLEYLHNHAIMHRDIKGANILVDNQGCIKLADFGASKQVAELATISGAKSMKGTPYWMAPEVILQTGHSFSADIWSVGCTVIEMVTGKAPWSQQYKEIAAIFHIGTTKSHPPIPDNISSDANDFLLKCLQQEPNLRPTASELLKHPFVTGKQKESASKDLTSFMDNSCSPLPSELTNITSYQTSTSDDVGDICNLGSLTCTLAFPEKSIQNNSLCLKSNNGYDDDDDNDMCLIDDENFLTYNGETGPSLDNNTDAKKSCDTMSEISDILKCKFDENSGNGETETKVSMEVDHPSYSEDENELTESKIKAFLDDKAAELKKLQTPLYEEFYNGMITCSPICMESNINNNKREEAPRGFLKLPPKSRSPSQGHIGRSPSRATDAACCSKSPESGNSSGAPKNSNASAGAEQESNSQSVALSEIERKWKEELDQELERKRREITRQAGMGSSPRDRSLSRHREKSRFASPGK.

The 263-residue stretch at 68 to 330 folds into the Protein kinase domain; sequence WRKGQLIGRG…ASELLKHPFV (263 aa). ATP is bound by residues 74-82 and K97; that span reads IGRGAFGTV. Residues 105 to 130 adopt a coiled-coil conformation; that stretch reads CASKEKTQAHIQELEEEVKLLKNLSH. Residues K108 and K110 each participate in a glycyl lysine isopeptide (Lys-Gly) (interchain with G-Cter in ubiquitin) cross-link. D196 acts as the Proton acceptor in catalysis. Disordered stretches follow at residues 460 to 483, 537 to 601, and 618 to 651; these read GNGE…DENE, RGFL…VALS, and KRRE…SPGK. Positions 464–477 are enriched in basic and acidic residues; it reads TETKVSMEVDHPSY. Polar residues predominate over residues 570–599; that stretch reads SPESGNSSGAPKNSNASAGAEQESNSQSVA. Positions 605-628 form a coiled coil; it reads RKWKEELDQELERKRREITRQAGM.

Belongs to the protein kinase superfamily. STE Ser/Thr protein kinase family. MAP kinase kinase kinase subfamily. As to expression, expressed in roots and flowers.

The protein resides in the cytoplasm. Its subcellular location is the cytoskeleton. It catalyses the reaction L-seryl-[protein] + ATP = O-phospho-L-seryl-[protein] + ADP + H(+). The catalysed reaction is L-threonyl-[protein] + ATP = O-phospho-L-threonyl-[protein] + ADP + H(+). Its function is as follows. Involved in cortical microtubules organization and stabilization by regulating the phosphorylation state of microtubule-associated proteins such as MAP65-1. The sequence is that of Mitogen-activated protein kinase kinase kinase 2 (ANP2) from Arabidopsis thaliana (Mouse-ear cress).